Reading from the N-terminus, the 457-residue chain is Ribosome biogenesis protein YTM1 (457 aa).

A ubiquitin-like (UBL) domain region spans residues valine 8–arginine 89. Residues asparagine 99–asparagine 457 are sufficient for interaction with ERB1 and association with 66S pre-ribosomes. WD repeat units lie at residues asparagine 101–tyrosine 140, glycine 142–serine 180, glycine 203–isoleucine 241, serine 282–threonine 322, threonine 324–isoleucine 363, glycine 370–threonine 410, and glycine 421–asparagine 457. Residues threonine 172–asparagine 191 are disordered.

This sequence belongs to the WD repeat WDR12/YTM1 family. In terms of assembly, component of the NOP7 complex, composed of ERB1, NOP7 and YTM1. The complex is held together by ERB1, which interacts with NOP7 via its N-terminal domain and with YTM1 via a high-affinity interaction between the seven-bladed beta-propeller domains of the 2 proteins. The NOP7 complex associates with the 66S pre-ribosome. Interacts (via UBL domain) with MDN1 (via VWFA/MIDAS domain).

Its subcellular location is the nucleus. The protein localises to the nucleolus. It localises to the nucleoplasm. In terms of biological role, component of the NOP7 complex, which is required for maturation of the 25S and 5.8S ribosomal RNAs and formation of the 60S ribosome. The chain is Ribosome biogenesis protein YTM1 from Candida glabrata (strain ATCC 2001 / BCRC 20586 / JCM 3761 / NBRC 0622 / NRRL Y-65 / CBS 138) (Yeast).